A 1810-amino-acid chain; its full sequence is Trinucleotide repeat-containing gene 6B protein (1810 aa).

Residues 1–22 (MQTNEGEVEEESSSQVEQEDFV) are compositionally biased toward acidic residues. Disordered regions lie at residues 1–221 (MQTN…PNPI), 235–1080 (EEWP…KKQM), 1141–1196 (MRKD…SSPG), and 1293–1329 (ALQQ…NMVP). Residues 33 to 75 (GEESKQEKEQEREEQLMEDKKRKKEDKKKKEATQKVTEQKTKV) are a coiled coil. 2 stretches are compositionally biased toward basic and acidic residues: residues 34 to 52 (EESK…MEDK) and 60 to 77 (KKKE…KVPE). The segment at 37–1028 (KQEKEQEREE…AMKPNSKSMQ (992 aa)) is interaction with argonaute proteins. A compositionally biased stretch (low complexity) spans 88-106 (AASPIGSSPSPPVNGGNNA). Residues 123-139 (MPREVPPRFRCQQDHKV) show a composition bias toward basic and acidic residues. The span at 165-174 (APGANPNNNA) shows a compositional bias: low complexity. The segment covering 180-190 (LLQSESGTAPE) has biased composition (polar residues). Composition is skewed to low complexity over residues 207–220 (GPGA…SPNP) and 248–260 (SSEN…SASN). Polar residues-rich tracts occupy residues 261 to 290 (PGSE…SGNE) and 306 to 327 (QPPN…TSGQ). Composition is skewed to low complexity over residues 335-346 (GFSNFNPNSNPS), 363-380 (ETES…GQAS), and 416-425 (NSLNLSSPNP). The span at 438-451 (GNTSRSTDAPSQST) shows a compositional bias: polar residues. The segment covering 475 to 486 (SGQSNSGNNGNN) has biased composition (low complexity). Composition is skewed to polar residues over residues 504–528 (GSKS…PQDN), 564–575 (GPNQPNSSTGAW), 611–623 (TGSN…SDSH), and 655–667 (LSNT…QIKQ). Positions 675 to 688 (EVPRPEGKSDKGTE) are enriched in basic and acidic residues. Polar residues-rich tracts occupy residues 774 to 783 (QPNQGWTSGK) and 793 to 804 (VKNNNWESSANK). Over residues 809-824 (WGEGGQNEIGTWGNGG) the composition is skewed to gly residues. Polar residues predominate over residues 846–857 (TGRQPNSWNKQH). The residue at position 913 (Ser913) is a Phosphoserine. 5 stretches are compositionally biased toward polar residues: residues 934–950 (NSYN…NSQG), 964–975 (TGKSASVWSKST), 1004–1027 (ASTT…SKSM), 1057–1072 (TAGS…SASW), and 1175–1195 (GNST…SSSP). A silencing domain; interaction with CNOT1 and PAN3 region spans residues 1191-1700 (LSSSPGLRAQ…LAEFATEDEV (510 aa)). Over residues 1295–1307 (QQQQQQQQQQQRQ) the composition is skewed to low complexity. Residue Ser1409 is modified to Phosphoserine. Thr1426 bears the Phosphothreonine mark. Ser1438 is subject to Phosphoserine. Thr1441 carries the post-translational modification Phosphothreonine. The tract at residues 1449 to 1467 (SNASWPPEFQPGVPWKGIQ) is PABPC1-interacting motif-2 (PAM2). The interval 1568 to 1619 (SSRNTTPLTRPPPGLTNPKPASPWSSTAPRSVRGWGTQDSRIASASTWSDGG) is disordered. A compositionally biased stretch (polar residues) spans 1604–1617 (TQDSRIASASTWSD). Residues 1625-1697 (YWLVLHNLTP…TTILAEFATE (73 aa)) form the RRM domain. Disordered regions lie at residues 1706–1740 (QAQP…GPAL) and 1786–1810 (EDPH…SDSI). The span at 1722-1733 (GWQSLETSQNQA) shows a compositional bias: polar residues. A compositionally biased stretch (low complexity) spans 1792–1801 (GSPAPLLPGD). Ser1793 and Ser1809 each carry phosphoserine.

Belongs to the GW182 family. As to quaternary structure, interacts with AGO1, AGO2, AGO3 and AGO4. Interacts with CNOT1; the interaction mediates the association with the CCR4-NOT complex. Interacts with PAN3; the interaction mediates the association with the PAN complex. Interacts with MOV10; the interaction is direct and RNA-dependent.

The protein localises to the cytoplasm. It is found in the P-body. Plays a role in RNA-mediated gene silencing by both micro-RNAs (miRNAs) and short interfering RNAs (siRNAs). Required for miRNA-dependent translational repression and siRNA-dependent endonucleolytic cleavage of complementary mRNAs by argonaute family proteins. As scaffolding protein associates with argonaute proteins bound to partially complementary mRNAs and simultaneously can recruit CCR4-NOT and PAN deadenylase complexes. This is Trinucleotide repeat-containing gene 6B protein (Tnrc6b) from Mus musculus (Mouse).